The primary structure comprises 609 residues: MSPPRDRVDAYYKDNFQFKNTRVVLNKEQLLIERPCMLLTVLFVMFLSLVGLLAIAGIRLHRAAVNTAKINNDLTTSIDITKSIEYQVKDVLTPLFKIIGDEVGLRTPQRFTDLTKFISDKIKFLNPDKEYDFRDINWCINPPERIKIDYDQYCAHTAAEDLITMLVNSSLTGTTVPRTSLVNLGRNCTGPTTTKGQFSNISLTLSGIYSGRGYNISSMITITGKGMYGSTYLVGKYNQRARRPSKVWHQDYRVFEVGIIRELGVGTPGFHMTNYLELPRQPELETCMLALGESKLAALCLADSPVALHYGRVGDDNKIRFVKLGVWASPADRDTLATLSAIDPTLDGLYITTHRGIIAAGTAIWAVPVTRTDDQVKMGKCRLEACRDRPPPFCNSTDWEPLEAGRIPAYGVLTIKLGLADEPKVDIISEFGPLITHDSGMDLYTSFDGTKYWLTTPPLQNSALGTVNTLVLEPSLKISPNILTLPIRSGGGDCYIPTYLSDRADDDVKLSSNLVILPSRDLQYVSATYDISRVEHAIVYHIYSTGRLSSYYYPFKLPIKGDPVSLQIECFPWDRKLWCHHFCSVVDSGTGEQVTHIGVVGIKITCNGK.

The Intravirion portion of the chain corresponds to 1 to 34; sequence MSPPRDRVDAYYKDNFQFKNTRVVLNKEQLLIER. A helical; Signal-anchor for type II membrane protein transmembrane segment spans residues 35–58; that stretch reads PCMLLTVLFVMFLSLVGLLAIAGI. Topologically, residues 59–609 are virion surface; the sequence is RLHRAAVNTA…VGIKITCNGK (551 aa). Asn-168, Asn-187, Asn-200, Asn-215, and Asn-395 each carry an N-linked (GlcNAc...) asparagine; by host glycan.

It belongs to the paramyxoviruses hemagglutinin-neuraminidase family. Non-sialidase subfamily.

The protein localises to the virion membrane. Its subcellular location is the host membrane. Attaches the virus to cell receptors and thereby initiating infection. Binding of H protein to the receptor induces a conformational change that allows the F protein to trigger virion/cell membranes fusion. Down-regulates human MCP/CD46 cell surface expression. In Bos indicus (Zebu), this protein is Hemagglutinin glycoprotein (H).